A 235-amino-acid polypeptide reads, in one-letter code: Serine protease SplA (235 aa).

A signal peptide spans 1 to 35 (MNKNVMVKGLTALTILTSLGFAENISNQPHSIAKA). Catalysis depends on charge relay system residues H74, D113, and S189.

It belongs to the peptidase S1B family.

The protein localises to the secreted. The protein is Serine protease SplA (splA) of Staphylococcus aureus (strain Mu3 / ATCC 700698).